Consider the following 103-residue polypeptide: Histone H4 (103 aa).

Residues Met1–Gly14 are compositionally biased toward gly residues. The disordered stretch occupies residues Met1 to Arg20. Position 6 is an N6-acetyl-N6-methyllysine; alternate (Lys6). N6-methyllysine; alternate occurs at positions 6, 9, and 13. Residue Lys13 is modified to N6-acetyl-N6-methyllysine; alternate. A DNA-binding region spans residues Lys17 to Lys21. At Lys92 the chain carries N6-glutaryllysine.

Belongs to the histone H4 family. As to quaternary structure, the nucleosome is a histone octamer containing two molecules each of H2A, H2B, H3 and H4 assembled in one H3-H4 heterotetramer and two H2A-H2B heterodimers. The octamer wraps approximately 147 bp of DNA. In terms of processing, glutarylation at Lys-92 (H4K91glu) destabilizes nucleosomes by promoting dissociation of the H2A-H2B dimers from nucleosomes.

Its subcellular location is the nucleus. The protein localises to the chromosome. Functionally, core component of nucleosome. Nucleosomes wrap and compact DNA into chromatin, limiting DNA accessibility to the cellular machineries which require DNA as a template. Histones thereby play a central role in transcription regulation, DNA repair, DNA replication and chromosomal stability. DNA accessibility is regulated via a complex set of post-translational modifications of histones, also called histone code, and nucleosome remodeling. The chain is Histone H4 (HHF1) from Mycosarcoma maydis (Corn smut fungus).